A 1038-amino-acid chain; its full sequence is Importin-7 (1038 aa).

At Met1 the chain carries N-acetylmethionine. One can recognise an Importin N-terminal domain in the interval 22–101; that stretch reads AERQLNEAHK…RENIVEAIIH (80 aa). The disordered stretch occupies residues 881 to 910; the sequence is EHENDSDDDDEAEDDDETEELGSDEDDIDE. Residues 884-910 are compositionally biased toward acidic residues; that stretch reads NDSDDDDEAEDDDETEELGSDEDDIDE. Ser886 carries the phosphoserine modification. A Phosphothreonine modification is found at Thr898. Residues Ser903 and Ser1020 each carry the phosphoserine modification.

The protein belongs to the importin beta family. As to quaternary structure, forms a heterodimer with KPNB1. Interacts with histone H1. Interacts with H2A, H2B, H3 and H4 histones. Interacts with SNUPN and XPO1. Interacts with RPS7 and RPL5. Interacts with RPL23A (via BIB domain). Binds directly to nuclear pore complexes. Interacts with SMAD4 and NUP93; translocates SMAD4 to the nucleus through the NPC upon BMP7 stimulation resulting in activation of SMAD4 signaling. Interacts with phosphorylated SMAD2; the interaction facilitates translocation of SMAD2 to the nucleus. Interacts with SRP19. Interacts with RUNX2; the interaction inhibits RUNX2 nuclear translocation in osteoblasts. Interacts with HDAC6, DLX3 and KLF4; the interaction facilitates HDAC6, DLX3 and KLF4 nuclear translocation in dental papilla cells. (Microbial infection) Interacts with HIV-1 reverse transcription complex integrase and rev.

The protein localises to the cytoplasm. Its subcellular location is the nucleus. Functions in nuclear protein import, either by acting as autonomous nuclear transport receptor or as an adapter-like protein in association with the importin-beta subunit KPNB1. Acting autonomously, is thought to serve itself as receptor for nuclear localization signals (NLS) and to promote translocation of import substrates through the nuclear pore complex (NPC) by an energy requiring, Ran-dependent mechanism. At the nucleoplasmic side of the NPC, Ran binds to importin, the importin/substrate complex dissociates and importin is re-exported from the nucleus to the cytoplasm where GTP hydrolysis releases Ran. The directionality of nuclear import is thought to be conferred by an asymmetric distribution of the GTP- and GDP-bound forms of Ran between the cytoplasm and nucleus. Mediates autonomously the nuclear import of ribosomal proteins RPL23A, RPS7 and RPL5. In association with KPNB1 mediates the nuclear import of H1 histone and the Ran-binding site of IPO7 is not required but synergizes with that of KPNB1 in importin/substrate complex dissociation. Promotes odontoblast differentiation via promoting nuclear translocation of DLX3, KLF4, SMAD2, thereby facilitating the transcription of target genes that play a role in odontoblast differentiation. Facilitates BMP4-induced translocation of SMAD1 to the nucleus and recruitment to the MSX1 gene promoter, thereby promotes the expression of the odontogenic regulator MSX1 in dental mesenchymal cells. Also promotes odontoblast differentiation by facilitating the nuclear translocation of HDAC6 and subsequent repression of RUNX2 expression. Inhibits osteoblast differentiation by inhibiting nuclear translocation of RUNX2 and therefore inhibition of RUNX2 target gene transcription. In vitro, mediates nuclear import of H2A, H2B, H3 and H4 histones. Functionally, (Microbial infection) Mediates the nuclear import of HIV-1 reverse transcription complex (RTC) integrase. Binds and mediates the nuclear import of HIV-1 Rev. The sequence is that of Importin-7 (IPO7) from Homo sapiens (Human).